The primary structure comprises 87 residues: MNSLLMITACLALVGTVWAKEGYLVNSYTGCKYECFKLGDNDYCLRECKQQYGKGAGGYCYAFGCWCTHLYEQAVVWPLKNKTCNGK.

Positions 1-19 are cleaved as a signal peptide; sequence MNSLLMITACLALVGTVWA. The LCN-type CS-alpha/beta domain occupies 20–85; that stretch reads KEGYLVNSYT…VWPLKNKTCN (66 aa). 4 disulfide bridges follow: Cys31-Cys84, Cys35-Cys60, Cys44-Cys65, and Cys48-Cys67. Asn85 is modified (asparagine amide).

The protein belongs to the long (4 C-C) scorpion toxin superfamily. Sodium channel inhibitor family. Beta subfamily. As to expression, expressed by the venom gland.

Its subcellular location is the secreted. Beta toxins bind voltage-independently at site-4 of sodium channels (Nav) and shift the voltage of activation toward more negative potentials thereby affecting sodium channel activation and promoting spontaneous and repetitive firing. This toxin affects the activation mechanism of sodium channels of squid axon. It also competes with Cn2 in rat brain synaptosomes. Is lethal to mice. In Centruroides noxius (Mexican scorpion), this protein is Beta-toxin Cn4.